Here is a 416-residue protein sequence, read N- to C-terminus: Glutamyl-tRNA reductase (416 aa).

Substrate-binding positions include 49–52, S105, 110–112, and Q116; these read TCNR and EPQ. The Nucleophile role is filled by C50. 185–190 contacts NADP(+); it reads GAGETI.

The protein belongs to the glutamyl-tRNA reductase family. As to quaternary structure, homodimer.

The enzyme catalyses (S)-4-amino-5-oxopentanoate + tRNA(Glu) + NADP(+) = L-glutamyl-tRNA(Glu) + NADPH + H(+). It participates in porphyrin-containing compound metabolism; protoporphyrin-IX biosynthesis; 5-aminolevulinate from L-glutamyl-tRNA(Glu): step 1/2. Its function is as follows. Catalyzes the NADPH-dependent reduction of glutamyl-tRNA(Glu) to glutamate 1-semialdehyde (GSA). This Shewanella sp. (strain MR-7) protein is Glutamyl-tRNA reductase.